We begin with the raw amino-acid sequence, 395 residues long: MKFSLALLATVALATISQAAPVEKQVAGKPFQLVKNPHYQANATRAIFRAEKKYARHTAIPEQGKTIVKSAASGTGSVPMTDVDYDVEYYATVSVGTPAQSIKLDFDTGSSDLWFSSTLCTSCGSKSFDPTKSSTYKKVGKSWQISYGDGSSASGITATDNVELGGLKITGQTIELATRESSSFSSGAIDGILGLGFDTISTVAGTKTPVDNLISQNLISKPIFGVWLGKQSEGGGGEYVFGGYNTDHIDGSLTTVKVDNSQGWYGVTVSGLKVGSKSVASSFDGILDTGTTLLIFDQATGSKVAAAYGAKDNGDGTYTISCDQSKLQPLALTMGGKDFFVPADSLIYVKQGSQCIAGFGYSSMDFAIIGDTFLKNNYVVFNQGVPEVQIAPSKA.

Residues 1-19 form the signal peptide; sequence MKFSLALLATVALATISQA. Positions 20–71 are cleaved as a propeptide — activation peptide; sequence APVEKQVAGKPFQLVKNPHYQANATRAIFRAEKKYARHTAIPEQGKTIVKSA. Residues 89 to 391 enclose the Peptidase A1 domain; that stretch reads YYATVSVGTP…NQGVPEVQIA (303 aa). The active site involves Asp-107. Cysteines 120 and 123 form a disulfide. The active site involves Asp-288. Cys-322 and Cys-355 form a disulfide bridge.

This sequence belongs to the peptidase A1 family. As to quaternary structure, monomer.

Functionally, hydrolysis of proteins with a broad specificity. Residues recognized to be cleaved were primarily those of trypsin and chymotrypsin and Lys was the most susceptible. This is Syncephapepsin (SPSR) from Syncephalastrum racemosum (Filamentous fungus).